A 620-amino-acid polypeptide reads, in one-letter code: Glutathione-regulated potassium-efflux system protein KefC (620 aa).

The Periplasmic portion of the chain corresponds to 1-3; it reads MDS. A helical membrane pass occupies residues 4-24; it reads HTLLQALIYLGSAALIVPIAV. A topological domain (cytoplasmic) is located at residue Arg-25. Residues 26-46 form a helical membrane-spanning segment; sequence LGLGSVLGYLIAGCIIGPWGL. The Periplasmic portion of the chain corresponds to 47 to 53; it reads RLVTDAE. A helical transmembrane segment spans residues 54-74; sequence SILHFAEIGVVLMLFVIGLEL. The Cytoplasmic segment spans residues 75-89; the sequence is DPQRLWKLRASVFGG. Residues 90 to 110 form a helical membrane-spanning segment; sequence GALQMGVCGGLIGLFCMFLGL. The Periplasmic portion of the chain corresponds to 111 to 113; that stretch reads RWQ. The chain crosses the membrane as a helical span at residues 114–134; sequence VAELIGMTLALSSTAIAMQAM. Over 135–148 the chain is Cytoplasmic; the sequence is NERNLTVSQVGRSA. The chain crosses the membrane as a helical span at residues 149 to 169; it reads FAVLLFQDIAAIPLVAMIPLL. Topologically, residues 170–177 are periplasmic; that stretch reads AASGASTT. A helical membrane pass occupies residues 178 to 198; it reads LGAFALSALKVAGALALVVLL. At 199–213 the chain is on the cytoplasmic side; it reads GRYVTRPALRFVARS. A helical transmembrane segment spans residues 214 to 233; the sequence is GLREVFSAVALFLVFGFGLL. Residues 234–236 lie on the Periplasmic side of the membrane; it reads LEE. Residues 237 to 254 traverse the membrane as a helical segment; the sequence is VGLSMAMGAFLAGVLLAS. Residues 255-269 are Cytoplasmic-facing; sequence SEYRHALESDIEPFK. A helical transmembrane segment spans residues 270-290; the sequence is GLLLGLFFIGVGMSIDFGTLV. The Periplasmic segment spans residues 291–293; it reads ENP. A helical membrane pass occupies residues 294-314; that stretch reads LRILLLLAGFLAIKIVMLWLV. Residues 315–326 lie on the Cytoplasmic side of the membrane; sequence ARPLGVPAKQRR. Residues 327-347 traverse the membrane as a helical segment; that stretch reads WFAVLLGQGSEFAFVVFGAAQ. Residues 348-358 lie on the Periplasmic side of the membrane; that stretch reads MADVLEPEWAK. Residues 359-379 traverse the membrane as a helical segment; that stretch reads ALTLAVALSMAATPIFLVLLT. Over 380–620 the chain is Cytoplasmic; sequence RMEKTATGEA…ADEPEVKPSI (241 aa). In terms of domain architecture, RCK N-terminal spans 399–518; the sequence is QPRVIVAGFG…AGVAMPERET (120 aa). Residues 599-620 form a disordered region; the sequence is QGTAEGKHSGEVADEPEVKPSI.

The protein belongs to the monovalent cation:proton antiporter 2 (CPA2) transporter (TC 2.A.37) family. KefC subfamily. In terms of assembly, homodimer. Interacts with the regulatory subunit KefF.

It localises to the cell inner membrane. In terms of biological role, pore-forming subunit of a potassium efflux system that confers protection against electrophiles. Catalyzes K(+)/H(+) antiport. This chain is Glutathione-regulated potassium-efflux system protein KefC, found in Salmonella typhimurium (strain LT2 / SGSC1412 / ATCC 700720).